Reading from the N-terminus, the 96-residue chain is UPF0102 protein ML1607 (96 aa).

Belongs to the UPF0102 family.

In Mycobacterium leprae (strain TN), this protein is UPF0102 protein ML1607.